A 443-amino-acid chain; its full sequence is KICSTOR complex protein ITFG2 (443 aa).

Residues 19-48 (FPHAICLGDVDNDALNELVVGDTSGKLSVY) form an FG-GAP 1; atypical repeat. Ser-104 bears the Phosphoserine mark. Residues 125 to 154 (NTKVMLISDIDGDGCYELVVGYTDRVVRAF) form an FG-GAP 2; atypical repeat. The residue at position 219 (Ser-219) is a Phosphoserine.

As to quaternary structure, part of the KICSTOR complex composed of KPTN, ITFG2, KICS2 and SZT2. SZT2 probably serves as a link between the other three proteins in the KICSTOR complex and may mediate the direct interaction with the GATOR complex via GATOR1. The KICSTOR complex interacts directly with the GATOR1 complex and most probably indirectly with the GATOR2 complex in an amino acid-independent manner.

The protein resides in the lysosome membrane. As part of the KICSTOR complex functions in the amino acid-sensing branch of the TORC1 signaling pathway. Recruits, in an amino acid-independent manner, the GATOR1 complex to the lysosomal membranes and allows its interaction with GATOR2 and the RAG GTPases. Functions upstream of the RAG GTPases and is required to negatively regulate mTORC1 signaling in absence of amino acids. In absence of the KICSTOR complex mTORC1 is constitutively localized to the lysosome and activated. The KICSTOR complex is also probably involved in the regulation of mTORC1 by glucose. The protein is KICSTOR complex protein ITFG2 of Mus musculus (Mouse).